Here is a 289-residue protein sequence, read N- to C-terminus: MSWLQKLLPPKINRPAGNSRKTVPEGLWSKCPSCESVLYRTDLESNSEVCPKCSYHNRISARTRLNFLLDAEGRSEIGMEVQPVDPLKFKDSKRYIDRLKTTQAEVGETDALIVMQGSIKAVGVVAAAFEFKFMGGSMGSVVGERFVRGVQAAIDNNTPFICVSASGGARMQEGMFSLMQMAKTSAALTRLSKAGLPYISVLTDPTMGGVSASFAMLGDVIIAEPQALIGFAGPRVIEQTVRETLPEGFQRSEFLLEHGAIDMIVDRREMRDKLATLMTSFMRVPAGAA.

A CoA carboxyltransferase N-terminal domain is found at 27 to 289 (LWSKCPSCES…SFMRVPAGAA (263 aa)). Residues cysteine 31, cysteine 34, cysteine 50, and cysteine 53 each coordinate Zn(2+). Residues 31–53 (CPSCESVLYRTDLESNSEVCPKC) form a C4-type zinc finger.

The protein belongs to the AccD/PCCB family. In terms of assembly, acetyl-CoA carboxylase is a heterohexamer composed of biotin carboxyl carrier protein (AccB), biotin carboxylase (AccC) and two subunits each of ACCase subunit alpha (AccA) and ACCase subunit beta (AccD). Requires Zn(2+) as cofactor.

It localises to the cytoplasm. It carries out the reaction N(6)-carboxybiotinyl-L-lysyl-[protein] + acetyl-CoA = N(6)-biotinyl-L-lysyl-[protein] + malonyl-CoA. It participates in lipid metabolism; malonyl-CoA biosynthesis; malonyl-CoA from acetyl-CoA: step 1/1. Component of the acetyl coenzyme A carboxylase (ACC) complex. Biotin carboxylase (BC) catalyzes the carboxylation of biotin on its carrier protein (BCCP) and then the CO(2) group is transferred by the transcarboxylase to acetyl-CoA to form malonyl-CoA. In Methylobacillus flagellatus (strain ATCC 51484 / DSM 6875 / VKM B-1610 / KT), this protein is Acetyl-coenzyme A carboxylase carboxyl transferase subunit beta.